The sequence spans 285 residues: Non-homologous end joining protein Ku (285 aa).

The Ku domain occupies 9-176; the sequence is ISFGLVNVPV…PAEIRHLEAS (168 aa). The tract at residues 250–285 is disordered; that stretch reads AMTDQKKQQNTAESETEEKPTKSTLTPRGRRKVKGA.

Belongs to the prokaryotic Ku family. As to quaternary structure, homodimer. Interacts with LigD.

In terms of biological role, with LigD forms a non-homologous end joining (NHEJ) DNA repair enzyme, which repairs dsDNA breaks with reduced fidelity. Binds linear dsDNA with 5'- and 3'- overhangs but not closed circular dsDNA nor ssDNA. Recruits and stimulates the ligase activity of LigD. In Desulfitobacterium hafniense (strain DSM 10664 / DCB-2), this protein is Non-homologous end joining protein Ku.